The following is a 544-amino-acid chain: Baeyer-Villiger monooxygenase (544 aa).

The FAD site is built by F27, E47, W56, D67, Y73, and V119.

This sequence belongs to the FAD-binding monooxygenase family. It depends on FAD as a cofactor.

Catalyzes a Baeyer-Villiger oxidation reaction, i.e. the insertion of an oxygen atom into a carbon-carbon bond adjacent to a carbonyl, which converts ketones to esters or lactones using NADPH as an electron donor. Besides cycloalkanones, can use cyclic alpha,beta-unsaturated ketones as substrates, leading to enol-lactones. Can also act on methylated cycloalkanones and methylated cycloalkenones with high enantioselectivity in some cases. The sequence is that of Baeyer-Villiger monooxygenase from Parvibaculum lavamentivorans (strain DS-1 / DSM 13023 / NCIMB 13966).